Reading from the N-terminus, the 67-residue chain is Retron Se72 cold shock-like protein (67 aa).

One can recognise a CSD domain in the interval 1–66; the sequence is MENGFVNFYD…KGFKAVAIQK (66 aa).

Functionally, probable cold shock-like component of antiviral defense system retron Se72, composed of a non-coding RNA (ncRNA), a reverse transcriptase (RT) and this protein. Expression of retron Se72 confers protection against bacteriophage lambda. At multiplicity of infection (MOI) of 0.02 cultures slow growth when infected with lambda but do not collapse, at MOI 2 cultures enter growth stasis. This is Retron Se72 cold shock-like protein from Salmonella heidelberg (strain 579083-10).